Consider the following 100-residue polypeptide: Urease subunit gamma (100 aa).

The protein belongs to the urease gamma subunit family. In terms of assembly, heterotrimer of UreA (gamma), UreB (beta) and UreC (alpha) subunits. Three heterotrimers associate to form the active enzyme. Although not discussed in the published references, Met-1 is represented in the submitted PDB entries as being modified by either a formyl, a carboxyl, or an acetyl group. The N-terminal is probably N-(dihydroxymethyl)methionine, the hydrated form of N-formylmethionine.

The protein localises to the cytoplasm. It catalyses the reaction urea + 2 H2O + H(+) = hydrogencarbonate + 2 NH4(+). It participates in nitrogen metabolism; urea degradation; CO(2) and NH(3) from urea (urease route): step 1/1. The polypeptide is Urease subunit gamma (Sporosarcina pasteurii (Bacillus pasteurii)).